A 734-amino-acid chain; its full sequence is Casein kinase II subunit alpha'-interacting protein (734 aa).

The interval 608 to 654 (SLLPSTSSSTSSSSTTSSSSSVASASSDSSSSSSSSSSFSISSSSSP) is disordered. Positions 612 to 654 (STSSSTSSSSTTSSSSSVASASSDSSSSSSSSSSFSISSSSSP) are enriched in low complexity.

In terms of assembly, interacts (via C-terminus) with CSNK2A2. Post-translationally, phosphorylated by CK2 (casein kinase II), specifically by complexes containing catalytic subunit CSNK2A2.

The protein resides in the nucleus. In terms of biological role, may play a role in chromatin regulation of male germ cells. This is Casein kinase II subunit alpha'-interacting protein from Homo sapiens (Human).